A 121-amino-acid chain; its full sequence is Large ribosomal subunit protein uL24 (121 aa).

This sequence belongs to the universal ribosomal protein uL24 family. Part of the 50S ribosomal subunit.

One of two assembly initiator proteins, it binds directly to the 5'-end of the 23S rRNA, where it nucleates assembly of the 50S subunit. Functionally, located at the polypeptide exit tunnel on the outside of the subunit. The protein is Large ribosomal subunit protein uL24 of Pyrococcus abyssi (strain GE5 / Orsay).